We begin with the raw amino-acid sequence, 220 residues long: MELYLDTANVAEVERLARIFPIAGVTTNPSIIAASKESIWEVLPRLQKAIGDEGILFAQTMSRDAQGMVKEAKHLRDAIPGIVVKIPVTSEGLAAIKMLKKEGITTLGTAVYSAAQGLLAALAGAKYVAPYVNRVDAQGGDGIRTVQELQALLEMHAPESMVLAASFKTPRQALDCLLAGCESITLPLDVAQQMLNTPAVESAIEKFEHDWNAAFGTTHL.

Residue K85 is the Schiff-base intermediate with substrate of the active site.

The protein belongs to the transaldolase family. Type 3A subfamily. As to quaternary structure, homodecamer.

The protein resides in the cytoplasm. It carries out the reaction beta-D-fructose 6-phosphate = dihydroxyacetone + D-glyceraldehyde 3-phosphate. In terms of biological role, catalyzes the reversible formation of fructose 6-phosphate from dihydroxyacetone and D-glyceraldehyde 3-phosphate via an aldolization reaction. The chain is Fructose-6-phosphate aldolase 2 (fsaB) from Escherichia coli O6:H1 (strain CFT073 / ATCC 700928 / UPEC).